A 329-amino-acid chain; its full sequence is MAAKLMHAIQYSGYGGGTDALKHVEVAVPDPKSDELLLKIEAATLNPIDWKIQKGVLRPLLPRKFPTIPGTDVAGEVVQAGSAVNRFKTGDKVVAVLSHATGGALAEYAVAKENLTVARPPEVSAAEGAALPVAALTAHQALTQFANIKLDGSGERKNILITAASGGVGHYAVQLAKLGNTHVTATCGARNLDFVKGLGADEVLDYKTPEGASLTSPSGKKYDYVVHGASGIPWSTFEPNLSEAGKVIDLTPGPTAMMTFAWKKLTFSKKQLVPLLLIPKIPNFEYVVNLVKEKKLKTVIDSKHPLSKGEDAWSRIMGGHATGKIIIEP.

This sequence belongs to the zinc-containing alcohol dehydrogenase family. Quinone oxidoreductase subfamily. In terms of processing, the transit peptide is not cleaved.

The protein resides in the plastid. It localises to the chloroplast inner membrane. In Spinacia oleracea (Spinach), this protein is Quinone-oxidoreductase homolog, chloroplastic (QOR).